The primary structure comprises 76 residues: Large ribosomal subunit protein eL29 (76 aa).

The segment covering 1–29 (MAKSKNHTNHNQNKKAHRNGIKRPLRKRH) has biased composition (basic residues). 2 disordered regions span residues 1-33 (MAKS…ESTL) and 47-76 (RKGN…PVTL). At Ser-31 the chain carries Phosphoserine. Residues 51 to 62 (LSREESVKRYNE) show a composition bias toward basic and acidic residues.

Belongs to the eukaryotic ribosomal protein eL29 family.

The polypeptide is Large ribosomal subunit protein eL29 (RpL29) (Drosophila melanogaster (Fruit fly)).